The sequence spans 67 residues: Guanine nucleotide-binding protein G(I)/G(S)/G(O) subunit gamma-13 (67 aa).

C64 bears the Cysteine methyl ester mark. Residue C64 is the site of S-farnesyl cysteine attachment. Positions 65 to 67 (TIL) are cleaved as a propeptide — removed in mature form.

This sequence belongs to the G protein gamma family. In terms of assembly, g proteins are composed of 3 units, alpha, beta and gamma.

It is found in the cell membrane. In terms of biological role, guanine nucleotide-binding proteins (G proteins) are involved as a modulator or transducer in various transmembrane signaling systems. The beta and gamma chains are required for the GTPase activity, for replacement of GDP by GTP, and for G protein-effector interaction. The polypeptide is Guanine nucleotide-binding protein G(I)/G(S)/G(O) subunit gamma-13 (GNG13) (Homo sapiens (Human)).